Here is a 204-residue protein sequence, read N- to C-terminus: MNIFEQTPPNRRRYGLAAFIGLIAGVVSAFVKWGAEVPLPPRSPVDMFNAACGPESLIRAAGQIDCSRNFLNPPYIFLRDWLGLTDPNAAVYTFAGHVFNWVGVTHIIFSIVFAVGYCVVAEVFPKIKLWQGLLAGALAQLFVHMISFPLMGLTPPLFDLPWYENVSEIFGHLVWFWSIEIIRRDLRNRITHEPDPEIPLGSNR.

Residues M1–Y14 are Periplasmic-facing. The helical transmembrane segment at G15–A35 threads the bilayer. The Cytoplasmic portion of the chain corresponds to E36–N100. A helical transmembrane segment spans residues W101 to A121. At E122–G132 the chain is on the periplasmic side. A helical transmembrane segment spans residues L133 to L153. At T154–R204 the chain is on the cytoplasmic side.

In terms of assembly, homodimer.

The protein resides in the cell inner membrane. This chain is Inner membrane protein YagU (yagU), found in Escherichia coli (strain K12).